Reading from the N-terminus, the 306-residue chain is tRNA dimethylallyltransferase (306 aa).

Residue glycine 2–threonine 9 participates in ATP binding. Threonine 4 to threonine 9 lines the substrate pocket. Interaction with substrate tRNA stretches follow at residues aspartate 27 to glutamine 30 and glutamine 152 to arginine 156.

This sequence belongs to the IPP transferase family. As to quaternary structure, monomer. Mg(2+) is required as a cofactor.

The enzyme catalyses adenosine(37) in tRNA + dimethylallyl diphosphate = N(6)-dimethylallyladenosine(37) in tRNA + diphosphate. In terms of biological role, catalyzes the transfer of a dimethylallyl group onto the adenine at position 37 in tRNAs that read codons beginning with uridine, leading to the formation of N6-(dimethylallyl)adenosine (i(6)A). The sequence is that of tRNA dimethylallyltransferase from Magnetococcus marinus (strain ATCC BAA-1437 / JCM 17883 / MC-1).